The chain runs to 1304 residues: Splicing factor 3B subunit 1 (1304 aa).

Disordered regions lie at residues 100 to 119 and 124 to 148; these read QYDP…EDEY and RTMI…PKMN. The segment covering 104 to 119 has biased composition (basic and acidic residues); that stretch reads FAEHRPPKIADREDEY. Phosphothreonine is present on Thr125. Position 129 is a phosphoserine (Ser129). Residue Lys141 is modified to N6-acetyllysine. Position 142 is a phosphothreonine (Thr142). Arg157 carries the post-translational modification Citrulline. The disordered stretch occupies residues 172 to 360; the sequence is LAEKAKAGEL…PVLTPGKTPI (189 aa). A Phosphoserine modification is found at Ser194. 3 positions are modified to phosphothreonine: Thr203, Thr207, and Thr211. The residue at position 214 (Lys214) is an N6-acetyllysine; alternate. Lys214 is covalently cross-linked (Glycyl lysine isopeptide (Lys-Gly) (interchain with G-Cter in SUMO2); alternate). Residues Thr223 and Thr227 each carry the phosphothreonine modification. The tract at residues 223–491 is interaction with PPP1R8; that stretch reads TPGHTPSLRW…VDESTLSPEE (269 aa). Ser229 is modified (phosphoserine). Residues 231–241 are compositionally biased toward basic and acidic residues; it reads RWDETPGRAKG. A phosphothreonine mark is found at Thr235, Thr244, Thr248, Thr257, Thr261, Thr267, Thr273, and Thr278. The residue at position 287 (Ser287) is a Phosphoserine. Residues 291-304 show a composition bias toward basic and acidic residues; it reads NRWDETPKTERDTP. Thr296, Thr299, Thr303, and Thr313 each carry phosphothreonine. At Ser322 the chain carries Phosphoserine. Residues Thr326 and Thr328 each carry the phosphothreonine modification. Residue Ser332 is modified to Phosphoserine. Thr341 is modified (phosphothreonine). The span at 342 to 352 shows a compositional bias: polar residues; it reads PASQMGGSTPV. 2 positions are modified to phosphoserine: Ser344 and Ser349. Residues Thr350 and Thr354 each carry the phosphothreonine modification. Ser400 is modified (phosphoserine). Lys413 participates in a covalent cross-link: Glycyl lysine isopeptide (Lys-Gly) (interchain with G-Cter in SUMO2); alternate. Lys413 is covalently cross-linked (Glycyl lysine isopeptide (Lys-Gly) (interchain with G-Cter in SUMO1); alternate). Thr426 is subject to Phosphothreonine. Residue Lys430 forms a Glycyl lysine isopeptide (Lys-Gly) (interchain with G-Cter in SUMO2) linkage. At Thr434 the chain carries Phosphothreonine; by DYRK1A. The residue at position 436 (Thr436) is a Phosphothreonine. Phosphoserine is present on Ser488. HEAT repeat units follow at residues 529–568, 569–603, 604–641, 643–677, 680–718, 763–801, 843–881, 1010–1048, 1052–1090, 1122–1160, and 1163–1201; these read GPLF…DLVR, PYVH…LAKA, AGLA…ALGI, SLLP…LMGC, LPHL…AATP, NYYT…TDGV, KVGA…NLGA, TPPI…RGAE, AREW…AIGP, TCSP…YIGE, and KDYI…GVYG. An interaction with PHF5A region spans residues 547 to 550; it reads QERH. N6-acetyllysine is present on residues Lys554 and Lys562. The interval 1156-1157 is interaction with PHF5A; sequence EY. The interaction with SF3B3 and SF3B5 stretch occupies residues 1248-1304; it reads QYCLQGLFHPARKVRDVYWKIYNSIYIGSQDALIAHYPRIYNDDKNTYIRYDLDYIL.

The protein belongs to the SF3B1 family. In terms of assembly, component of the 17S U2 SnRNP complex, a ribonucleoprotein complex that contains small nuclear RNA (snRNA) U2 and a number of specific proteins. Part of the SF3B subcomplex of the 17S U2 SnRNP complex. SF3B associates with the splicing subcomplex SF3A and a 12S RNA unit to form the U2 small nuclear ribonucleoproteins complex (U2 snRNP). Within the SF3B complex, interacts directly (via HEAT domain) with SF3B3, SF3B5, SF3B6 and (via HEAT domain) with PHF5A. The SF3B subcomplex interacts with U2AF2. Identified in the spliceosome C complex. Component of the minor (U12-type spliceosome) spliceosome. Within the minor spliceosome complex, interacts with SCNM1 and CRIPT. Component of the B-WICH complex, at least composed of SMARCA5/SNF2H, BAZ1B/WSTF, SF3B1, DEK, MYO1C, ERCC6, MYBBP1A and DDX21. Phosphorylated form interacts with PPP1R8. Interacts with PQBP1. Interacts with RBM17. Interacts with RBM39. Interacts with SETX. Interacts with RBM15. Interacts with USH1G. Interacts with SDE2. Interacts with U2AF1. Interacts with CACTIN. Interacts with ZRSR1. Interacts with CYREN. Phosphorylated. Phosphorylation occurs concomitantly with the splicing catalytic steps. Phosphorylation on Thr-244, Thr-248 and Thr-313 by cyclin-dependent kinases promotes interaction with PPP1R8 during mitosis. In terms of processing, citrullinated by PADI4. As to expression, ubiquitous.

The protein localises to the nucleus. It localises to the nucleus speckle. Functionally, component of the 17S U2 SnRNP complex of the spliceosome, a large ribonucleoprotein complex that removes introns from transcribed pre-mRNAs. The 17S U2 SnRNP complex (1) directly participates in early spliceosome assembly and (2) mediates recognition of the intron branch site during pre-mRNA splicing by promoting the selection of the pre-mRNA branch-site adenosine, the nucleophile for the first step of splicing. Within the 17S U2 SnRNP complex, SF3B1 is part of the SF3B subcomplex, which is required for 'A' complex assembly formed by the stable binding of U2 snRNP to the branchpoint sequence in pre-mRNA. Sequence independent binding of SF3A and SF3B subcomplexes upstream of the branch site is essential, it may anchor U2 snRNP to the pre-mRNA. May also be involved in the assembly of the 'E' complex. Also acts as a component of the minor spliceosome, which is involved in the splicing of U12-type introns in pre-mRNAs. Together with other U2 snRNP complex components may also play a role in the selective processing of microRNAs (miRNAs) from the long primary miRNA transcript, pri-miR-17-92. This chain is Splicing factor 3B subunit 1, found in Mus musculus (Mouse).